The primary structure comprises 118 residues: Acidic elicitin A1 (118 aa).

The N-terminal stretch at 1 to 20 (MNFRALFAATVAALVGSTSA) is a signal peptide. 3 disulfides stabilise this stretch: Cys23–Cys91, Cys47–Cys76, and Cys71–Cys115.

Belongs to the elicitin family.

Its subcellular location is the secreted. Its function is as follows. Induces local and distal defense responses (incompatible hypersensitive reaction) in plants from the solanaceae and cruciferae families. Elicits leaf necrosis and causes the accumulation of pathogenesis-related proteins. Might interact with the lipidic molecules of the plasma membrane. The polypeptide is Acidic elicitin A1 (B14) (Phytophthora cryptogea).